The following is a 232-amino-acid chain: Ion-translocating oxidoreductase complex subunit E (232 aa).

6 helical membrane passes run 18-38, 39-59, 69-89, 93-113, 127-147, and 182-202; these read GLVQ…LTNA, IGLG…VSLV, IPVF…LINA, GLYL…VIIG, AAFD…LLGA, and NFLL…LIAI.

This sequence belongs to the NqrDE/RnfAE family. As to quaternary structure, the complex is composed of six subunits: RnfA, RnfB, RnfC, RnfD, RnfE and RnfG.

It localises to the cell inner membrane. Functionally, part of a membrane-bound complex that couples electron transfer with translocation of ions across the membrane. This chain is Ion-translocating oxidoreductase complex subunit E, found in Shewanella loihica (strain ATCC BAA-1088 / PV-4).